The chain runs to 189 residues: Small ribosomal subunit protein uS5 (189 aa).

Residues 22–85 enclose the S5 DRBM domain; the sequence is FVDKLVAINR…ESAKRDLIFV (64 aa).

The protein belongs to the universal ribosomal protein uS5 family. In terms of assembly, part of the 30S ribosomal subunit. Contacts proteins S4 and S8.

With S4 and S12 plays an important role in translational accuracy. In terms of biological role, located at the back of the 30S subunit body where it stabilizes the conformation of the head with respect to the body. The chain is Small ribosomal subunit protein uS5 from Agrobacterium fabrum (strain C58 / ATCC 33970) (Agrobacterium tumefaciens (strain C58)).